The sequence spans 119 residues: Ubiquinone biosynthesis accessory factor UbiK (119 aa).

Residues 79–99 (LLRTREKLALLEQRLSELEAR) are a coiled coil. Basic and acidic residues predominate over residues 96–106 (LEARDKPEEVK). Residues 96-119 (LEARDKPEEVKPAPAIPPVDPQQE) form a disordered region. Pro residues predominate over residues 109 to 119 (PAIPPVDPQQE).

Belongs to the UbiK family. In terms of assembly, homotrimer.

Its subcellular location is the cytoplasm. It functions in the pathway cofactor biosynthesis; ubiquinone biosynthesis. In terms of biological role, required for efficient ubiquinone (coenzyme Q) biosynthesis under aerobic conditions. UbiK is probably an accessory factor of Ubi enzymes and facilitates ubiquinone biosynthesis by acting as an assembly factor, a targeting factor, or both. Dispensable for ubiquinone biosynthesis under anaerobiosis. Required for proliferation in macrophages and virulence in mice. Significantly contributes to colonization and invasion as well as host inflammation and innate immunity after infection. In vitro, has membrane fusogenic activity at acidic pH. The chain is Ubiquinone biosynthesis accessory factor UbiK from Salmonella typhimurium (strain LT2 / SGSC1412 / ATCC 700720).